A 551-amino-acid polypeptide reads, in one-letter code: MLPLLLLPLLWGGSLQEKPVYELQVQKSVTVQEGLCVLVPCSFSYPWRSWYSSPPLYVYWFRDGEIPYYAEVVATNNPDRRVKPETQGRFRLLGDVQKKNCSLSIGDARMEDTGSYFFRVERGRDVKYSYQQNKLNLEVTALIEKPDIHFLEPLESGRPTRLSCSLPGSCEAGPPLTFSWTGNALSPLDPETTRSSELTLTPRPEDHGTNLTCQMKRQGAQVTTERTVQLNVSYAPQTITIFRNGIALEILQNTSYLPVLEGQALRLLCDAPSNPPAHLSWFQGSPALNATPISNTGILELRRVRSAEEGGFTCRAQHPLGFLQIFLNLSVYSLPQLLGPSCSWEAEGLHCRCSFRARPAPSLCWRLEEKPLEGNSSQGSFKVNSSSAGPWANSSLILHGGLSSDLKVSCKAWNIYGSQSGSVLLLQGRSNLGTGVVPAALGGAGVMALLCICLCLIFFLIVKARRKQAAGRPEKMDDEDPIMGTITSGSRKKPWPDSPGDQASPPGDAPPLEEQKELHYASLSFSEMKSREPKDQEAPSTTEYSEIKTSK.

A signal peptide spans 1 to 16; sequence MLPLLLLPLLWGGSLQ. Residues 17–441 are Extracellular-facing; it reads EKPVYELQVQ…LGTGVVPAAL (425 aa). The Ig-like V-type domain maps to 19-136; that stretch reads PVYELQVQKS…KYSYQQNKLN (118 aa). Cystine bridges form between C36–C170, C41–C101, and C164–C213. N100 carries N-linked (GlcNAc...) asparagine glycosylation. Positions 119, 127, and 129 each coordinate N-acetylneuraminate. The Ig-like C2-type 1 domain occupies 146-229; it reads PDIHFLEPLE…AQVTTERTVQ (84 aa). The tract at residues 189–210 is disordered; it reads DPETTRSSELTLTPRPEDHGTN. N-linked (GlcNAc...) asparagine glycans are attached at residues N210, N231, and N253. An Ig-like C2-type 2 domain is found at 236-330; the sequence is PQTITIFRNG…GFLQIFLNLS (95 aa). The cysteines at positions 269 and 314 are disulfide-linked. Residues N328, N375, N384, and N393 are each glycosylated (N-linked (GlcNAc...) asparagine). Residues 442–462 traverse the membrane as a helical segment; sequence GGAGVMALLCICLCLIFFLIV. The Cytoplasmic segment spans residues 463–551; sequence KARRKQAAGR…TEYSEIKTSK (89 aa). The tract at residues 469–551 is disordered; sequence AAGRPEKMDD…TEYSEIKTSK (83 aa). An ITIM motif motif is present at residues 518-523; sequence LHYASL. The span at 528 to 537 shows a compositional bias: basic and acidic residues; it reads MKSREPKDQE. Positions 542–547 match the SLAM-like motif motif; the sequence is TEYSEI.

The protein belongs to the immunoglobulin superfamily. SIGLEC (sialic acid binding Ig-like lectin) family. As to expression, expressed by monocytic/myeloid lineage cells. Found at high levels in peripheral blood leukocytes, spleen, bone marrow and at lower levels in lymph node, lung, appendix, placenta, pancreas and thymus. Expressed by monocytes and neutrophils but absent from leukemic cell lines representing early stages of myelomonocytic differentiation.

It localises to the membrane. Putative adhesion molecule that mediates sialic-acid dependent binding to cells. Binds equally to alpha-2,3-linked and alpha-2,6-linked sialic acid. The sialic acid recognition site may be masked by cis interactions with sialic acids on the same cell surface. The polypeptide is Sialic acid-binding Ig-like lectin 5 (SIGLEC5) (Homo sapiens (Human)).